The primary structure comprises 347 residues: NADH-quinone oxidoreductase subunit H (347 aa).

9 helical membrane passes run 13-33 (IIMI…IAYV), 50-70 (PNVV…KFVF), 82-102 (AVFL…WAVV), 115-135 (VGIL…IMGG), 161-181 (IGFV…TDIV), 198-218 (FLDW…ISAL), 263-283 (CSLT…IWIL), 286-306 (VPGI…FAMV), and 321-341 (LGWK…AFVL).

Belongs to the complex I subunit 1 family. As to quaternary structure, NDH-1 is composed of 14 different subunits. Subunits NuoA, H, J, K, L, M, N constitute the membrane sector of the complex.

It localises to the cell inner membrane. The catalysed reaction is a quinone + NADH + 5 H(+)(in) = a quinol + NAD(+) + 4 H(+)(out). In terms of biological role, NDH-1 shuttles electrons from NADH, via FMN and iron-sulfur (Fe-S) centers, to quinones in the respiratory chain. The immediate electron acceptor for the enzyme in this species is believed to be ubiquinone. Couples the redox reaction to proton translocation (for every two electrons transferred, four hydrogen ions are translocated across the cytoplasmic membrane), and thus conserves the redox energy in a proton gradient. This subunit may bind ubiquinone. This Rhizobium leguminosarum bv. trifolii (strain WSM2304) protein is NADH-quinone oxidoreductase subunit H.